A 530-amino-acid chain; its full sequence is Plexin domain-containing protein 2 (530 aa).

The first 30 residues, 1–30 (MARFRRADLAAAGVMLLCHFLTDRFQFAHG), serve as a signal peptide directing secretion. The Extracellular segment spans residues 31–455 (EPGHHTNDWI…AEKKGGTLHA (425 aa)). Asparagine 103 and asparagine 160 each carry an N-linked (GlcNAc...) asparagine glycan. Residues 327–372 (TCLQFNGCGPCVSSQIGFNCSWCSKLQRCSSGFDRHRQDWVDSGCP) enclose the PSI domain. Positions 378 to 387 (KEKMCEKTEP) are enriched in basic and acidic residues. The tract at residues 378–399 (KEKMCEKTEPGETSQTTTTSHT) is disordered. The segment covering 390–399 (TSQTTTTSHT) has biased composition (low complexity). Residues 456-476 (GLIVGILILVLIIAAAILVTV) form a helical membrane-spanning segment. Residues 477–530 (YMYHHPTSAASIFFIERRPSRWPAMKFRRGSGHPAYAEVEPVGEKEGFIVSEQC) lie on the Cytoplasmic side of the membrane. A Phosphoserine modification is found at serine 507.

Belongs to the plexin family. Interacts with CTTN. In terms of tissue distribution, expressed in tumor endothelium and in vessels of some normal tissues, such as the muscle and lung.

Its subcellular location is the membrane. Its function is as follows. May play a role in tumor angiogenesis. This chain is Plexin domain-containing protein 2 (Plxdc2), found in Mus musculus (Mouse).